The primary structure comprises 219 residues: Small ribosomal subunit protein uS3c (219 aa).

One can recognise a KH type-2 domain in the interval 43–118 (IKNYVQNNMI…KLNITITRIE (76 aa)).

The protein belongs to the universal ribosomal protein uS3 family. As to quaternary structure, part of the 30S ribosomal subunit.

It is found in the plastid. The protein is Small ribosomal subunit protein uS3c (rps3) of Cuscuta exaltata (Tall dodder).